A 123-amino-acid chain; its full sequence is Small ribosomal subunit protein uS13c (123 aa).

The disordered stretch occupies residues 99 to 123; that stretch reads GQRTRSNARTRRGAKKTVAGKKLAK. The segment covering 100–123 has biased composition (basic residues); it reads QRTRSNARTRRGAKKTVAGKKLAK.

This sequence belongs to the universal ribosomal protein uS13 family. Part of the 30S ribosomal subunit.

The protein resides in the plastid. It localises to the chloroplast. Located at the top of the head of the 30S subunit, it contacts several helices of the 16S rRNA. The chain is Small ribosomal subunit protein uS13c from Cyanidioschyzon merolae (strain NIES-3377 / 10D) (Unicellular red alga).